A 1358-amino-acid chain; its full sequence is DNA-directed RNA polymerase subunit beta (1358 aa).

It belongs to the RNA polymerase beta chain family. The RNAP catalytic core consists of 2 alpha, 1 beta, 1 beta' and 1 omega subunit. When a sigma factor is associated with the core the holoenzyme is formed, which can initiate transcription.

It carries out the reaction RNA(n) + a ribonucleoside 5'-triphosphate = RNA(n+1) + diphosphate. Its function is as follows. DNA-dependent RNA polymerase catalyzes the transcription of DNA into RNA using the four ribonucleoside triphosphates as substrates. This is DNA-directed RNA polymerase subunit beta from Thioalkalivibrio sulfidiphilus (strain HL-EbGR7).